Reading from the N-terminus, the 208-residue chain is Imidazoleglycerol-phosphate dehydratase (208 aa).

The protein belongs to the imidazoleglycerol-phosphate dehydratase family.

It localises to the cytoplasm. It catalyses the reaction D-erythro-1-(imidazol-4-yl)glycerol 3-phosphate = 3-(imidazol-4-yl)-2-oxopropyl phosphate + H2O. It participates in amino-acid biosynthesis; L-histidine biosynthesis; L-histidine from 5-phospho-alpha-D-ribose 1-diphosphate: step 6/9. The protein is Imidazoleglycerol-phosphate dehydratase of Paenarthrobacter aurescens (strain TC1).